The primary structure comprises 82 residues: Delta-actitoxin-Aeq2c (82 aa).

Residues Met1–Ala19 form the signal peptide. Positions Asp20–Ala26 are excised as a propeptide. 3 disulfides stabilise this stretch: Cys32/Cys79, Cys34/Cys69, and Cys62/Cys80.

The protein belongs to the sea anemone sodium channel inhibitory toxin family. Type I subfamily.

It localises to the secreted. The protein localises to the nematocyst. In terms of biological role, binds specifically to voltage-gated sodium channels (Nav), thereby delaying their inactivation during signal transduction. Causes death to crabs. The polypeptide is Delta-actitoxin-Aeq2c (Actinia equina (Beadlet anemone)).